Here is a 469-residue protein sequence, read N- to C-terminus: Adenosylhomocysteinase (469 aa).

T63, D139, and E164 together coordinate substrate. 165 to 167 (TTT) contributes to the NAD(+) binding site. K194 and D198 together coordinate substrate. Residues N199, 228 to 233 (GYGDVG), E251, N300, 321 to 323 (IGH), and N375 each bind NAD(+).

The protein belongs to the adenosylhomocysteinase family. The cofactor is NAD(+).

It is found in the cytoplasm. It carries out the reaction S-adenosyl-L-homocysteine + H2O = L-homocysteine + adenosine. The protein operates within amino-acid biosynthesis; L-homocysteine biosynthesis; L-homocysteine from S-adenosyl-L-homocysteine: step 1/1. Its function is as follows. May play a key role in the regulation of the intracellular concentration of adenosylhomocysteine. The sequence is that of Adenosylhomocysteinase from Pseudomonas fluorescens (strain ATCC BAA-477 / NRRL B-23932 / Pf-5).